Reading from the N-terminus, the 71-residue chain is Protein CYSTEINE-RICH TRANSMEMBRANE MODULE 6 (71 aa).

The segment covering 1–12 (MSQYSQNQSSGA) has biased composition (polar residues). A disordered region spans residues 1-36 (MSQYSQNQSSGAYPTPPVSTGPYVAPPPLGYPTNDT). The span at 14 to 30 (PTPPVSTGPYVAPPPLG) shows a compositional bias: pro residues. The helical transmembrane segment at 48-64 (SKGDGFLKGCLAAMCCC) threads the bilayer.

This sequence belongs to the CYSTM1 family. In terms of assembly, homodimer and heterodimers. Interacts with CYSTM7 and WIH1/CYSTM13. Mostly expressed in roots, stems, rosette leaves and siliques and, to a lower extent, in flowers and cauline leaves.

It localises to the cell membrane. Its subcellular location is the cytoplasm. Functionally, involved in resistance to abiotic stress. This chain is Protein CYSTEINE-RICH TRANSMEMBRANE MODULE 6, found in Arabidopsis thaliana (Mouse-ear cress).